Consider the following 385-residue polypeptide: Centrosomal protein of 44 kDa (385 aa).

The binds with microtubules and centrioles stretch occupies residues 11–192; that stretch reads RNLEQVLRSL…GANIPEDTVT (182 aa). The interval 126-154 is disordered; that stretch reads LEKTPSQQRKKTSSAKSEPCSSTEKTSTE. Positions 139 to 154 are enriched in polar residues; sequence SAKSEPCSSTEKTSTE. The stretch at 230-271 forms a coiled coil; sequence EVTALQSMLAECQEKLKKLTCIESRLESLEEKMKGKVLVNEK. The tract at residues 303–348 is disordered; the sequence is SEDYSSSSDMDSLNPDRKSKEERHANIPLSSGYSTVSSDSTPRTST. The span at 305 to 314 shows a compositional bias: low complexity; the sequence is DYSSSSDMDS. Residues 316–327 are compositionally biased toward basic and acidic residues; the sequence is NPDRKSKEERHA. Over residues 332–342 the composition is skewed to low complexity; the sequence is SSGYSTVSSDS. At S342 the chain carries Phosphoserine. T343 is modified (phosphothreonine). Residues 358–381 are a coiled coil; sequence SEETTMQKMERMKKMFEETAELLK.

Interacts with CROCC. Interacts with POC1B; the interaction is direct and recruits POC1B to centriolar microtubules. Binds to centriolar microtubules.

It is found in the cytoplasm. The protein localises to the cytoskeleton. Its subcellular location is the microtubule organizing center. The protein resides in the centrosome. It localises to the centriole. It is found in the spindle pole. The protein localises to the midbody. Centriole-enriched microtubule-binding protein involved in centriole biogenesis. In collaboration with CEP295 and POC1B, is required for the centriole-to-centrosome conversion by ensuring the formation of bona fide centriole wall. Functions as a linker component that maintains centrosome cohesion. Associates with CROCC and regulates its stability and localization to the centrosome. The polypeptide is Centrosomal protein of 44 kDa (CEP44) (Bos taurus (Bovine)).